The chain runs to 501 residues: Cystine/glutamate transporter (501 aa).

The Cytoplasmic portion of the chain corresponds to 1–43; it reads MVRKPVVSTISKGGYLQGNVNGRLPSLGNKEPPGQEKVQLKRK. Serine 26 bears the Phosphoserine mark. The helical transmembrane segment at 44–64 threads the bilayer; that stretch reads VTLLRGVSIIIGTIIGAGIFI. At 65–74 the chain is on the extracellular side; that stretch reads SPKGVLQNTG. The chain crosses the membrane as a helical span at residues 75–95; that stretch reads SVGMSLTIWTVCGVLSLFGAL. Residues 96–101 are Cytoplasmic-facing; sequence SYAELG. An intramembrane segment occupies 102–116; that stretch reads TTIKKSGGHYTYILE. Topologically, residues 117–130 are cytoplasmic; that stretch reads VFGPLPAFVRVWVE. Residues 131-150 traverse the membrane as a helical segment; sequence LLIIRPAATAVISLAFGRYI. Arginine 135 lines the L-glutamate pocket. Residues 151-163 are Extracellular-facing; it reads LEPFFIQCEIPEL. The helical transmembrane segment at 164–179 threads the bilayer; the sequence is AIKLITAVGITVVMVL. The Cytoplasmic portion of the chain corresponds to 180 to 193; it reads NSMSVSWSARIQIF. Residues 194-210 traverse the membrane as a helical segment; it reads LTFCKLTAILIIIVPGV. At 211–234 the chain is on the extracellular side; it reads MQLIKGQTQNFKDAFSGRDSSITR. The chain crosses the membrane as a helical span at residues 235 to 255; that stretch reads LPLAFYYGMYAYAGWFYLNFV. An L-glutamate-binding site is contributed by tyrosine 244. Over 256-265 the chain is Cytoplasmic; the sequence is TEEVENPEKT. A helical transmembrane segment spans residues 266–286; sequence IPLAICISMAIVTIGYVLTNV. Residues 287–317 are Extracellular-facing; sequence AYFTTINAEELLLSNAVAVTFSERLLGNFSL. A glycan (N-linked (GlcNAc...) asparagine) is linked at asparagine 314. Residues 318 to 338 traverse the membrane as a helical segment; the sequence is AVPIFVALSCFGSMNGGVFAV. Residues 339-364 lie on the Cytoplasmic side of the membrane; sequence SRLFYVASREGHLPEILSMIHVRKHT. Residues 365-385 form a helical membrane-spanning segment; the sequence is PLPAVIVLHPLTMIMLFSGDL. The Extracellular segment spans residues 386-387; it reads DS. A helical membrane pass occupies residues 388-408; the sequence is LLNFLSFARWLFIGLAVAGLI. The Cytoplasmic segment spans residues 409–422; that stretch reads YLRYKCPDMHRPFK. Residues 423 to 443 form a helical membrane-spanning segment; it reads VPLFIPALFSFTCLFMVALSL. At 444-449 the chain is on the extracellular side; sequence YSDPFS. The helical transmembrane segment at 450 to 470 threads the bilayer; the sequence is TGIGSVITLTGVPAYYLFIIW. Over 471-501 the chain is Cytoplasmic; the sequence is DKKPRWFRIMSEKITRTLQIILEVVPEEDKL.

Belongs to the amino acid-polyamine-organocation (APC) superfamily. L-type amino acid transporter (LAT) (TC 2.A.3.8) family. As to quaternary structure, disulfide-linked heterodimer with the amino acid transport protein SLC3A2/4F2hc; this interaction mediates cell membrane localization.

The protein resides in the cell membrane. It is found in the cell projection. Its subcellular location is the microvillus membrane. It carries out the reaction L-cystine(out) + L-glutamate(in) = L-cystine(in) + L-glutamate(out). The enzyme catalyses an L-alpha-amino acid(in) + L-kynurenine(out) = an L-alpha-amino acid(out) + L-kynurenine(in). It catalyses the reaction N-acetyl-L-cysteine(out) + L-glutamate(in) = N-acetyl-L-cysteine(in) + L-glutamate(out). Its function is as follows. Heterodimer with SLC3A2, that functions as an antiporter by mediating the exchange of extracellular anionic L-cystine and intracellular L-glutamate across the cellular plasma membrane. Provides L-cystine for the maintenance of the redox balance between extracellular L-cystine and L-cysteine and for the maintenance of the intracellular levels of glutathione that is essential for cells protection from oxidative stress. The transport is sodium-independent, electroneutral with a stoichiometry of 1:1, and is drove by the high intracellular concentration of L-glutamate and the intracellular reduction of L-cystine. In addition, mediates the import of L-kynurenine leading to anti-ferroptotic signaling propagation required to maintain L-cystine and glutathione homeostasis. Moreover, mediates N-acetyl-L-cysteine uptake into the placenta leading to subsequently down-regulation of pathways associated with oxidative stress, inflammation and apoptosis. In vitro can also transport L-aspartate. May participate in astrocyte and meningeal cell proliferation during development and can provide neuroprotection by promoting glutathione synthesis and delivery from non-neuronal cells such as astrocytes and meningeal cells to immature neurons. Controls the production of pheomelanin pigment directly. In Pongo abelii (Sumatran orangutan), this protein is Cystine/glutamate transporter.